The sequence spans 435 residues: Putative BTB/POZ domain-containing protein L275 (435 aa).

Positions 80-149 (YDGYVYINVG…IKGKQNDNHN (70 aa)) constitute a BTB domain.

This sequence belongs to the mimivirus BTB/WD family.

This Acanthamoeba polyphaga mimivirus (APMV) protein is Putative BTB/POZ domain-containing protein L275.